The primary structure comprises 785 residues: Endonuclease MutS2 (785 aa).

333-340 (GPNTGGKT) contacts ATP. In terms of domain architecture, Smr spans 710-785 (LDLRGQRYDE…GNGATIVQLK (76 aa)).

This sequence belongs to the DNA mismatch repair MutS family. MutS2 subfamily. As to quaternary structure, homodimer. Binds to stalled ribosomes, contacting rRNA.

Endonuclease that is involved in the suppression of homologous recombination and thus may have a key role in the control of bacterial genetic diversity. Functionally, acts as a ribosome collision sensor, splitting the ribosome into its 2 subunits. Detects stalled/collided 70S ribosomes which it binds and splits by an ATP-hydrolysis driven conformational change. Acts upstream of the ribosome quality control system (RQC), a ribosome-associated complex that mediates the extraction of incompletely synthesized nascent chains from stalled ribosomes and their subsequent degradation. Probably generates substrates for RQC. The sequence is that of Endonuclease MutS2 from Lactobacillus acidophilus (strain ATCC 700396 / NCK56 / N2 / NCFM).